A 115-amino-acid chain; its full sequence is Large ribosomal subunit protein eL30 (115 aa).

A phosphoserine mark is found at S10 and S16. K26 carries the N6-acetyllysine; alternate modification. Residue K26 forms a Glycyl lysine isopeptide (Lys-Gly) (interchain with G-Cter in SUMO2); alternate linkage.

It belongs to the eukaryotic ribosomal protein eL30 family. In terms of assembly, component of the large ribosomal subunit.

It localises to the cytoplasm. Component of the large ribosomal subunit. The ribosome is a large ribonucleoprotein complex responsible for the synthesis of proteins in the cell. The protein is Large ribosomal subunit protein eL30 (RPL30) of Oryctolagus cuniculus (Rabbit).